The chain runs to 216 residues: Pyrrolidone-carboxylate peptidase (216 aa).

Catalysis depends on residues glutamate 80, cysteine 143, and histidine 168.

It belongs to the peptidase C15 family. In terms of assembly, homotetramer.

It localises to the cytoplasm. The enzyme catalyses Release of an N-terminal pyroglutamyl group from a polypeptide, the second amino acid generally not being Pro.. In terms of biological role, removes 5-oxoproline from various penultimate amino acid residues except L-proline. This chain is Pyrrolidone-carboxylate peptidase, found in Cupriavidus necator (strain ATCC 17699 / DSM 428 / KCTC 22496 / NCIMB 10442 / H16 / Stanier 337) (Ralstonia eutropha).